The primary structure comprises 559 residues: Myb/SANT-like DNA-binding domain-containing protein 2 (559 aa).

Residues 1–62 (MAAPCGSELP…GSAAGSGAAA (62 aa)) form a disordered region. S13, S24, S27, S32, and S48 each carry phosphoserine. Residues 46–61 (GASPLGPGSAAGSGAA) are compositionally biased toward low complexity. Positions 103 to 173 (SWTPAETNAL…QCRERIKTLR (71 aa)) constitute a Myb-like domain. Glycyl lysine isopeptide (Lys-Gly) (interchain with G-Cter in SUMO2) cross-links involve residues K268 and K343. Position 436 is a phosphoserine (S436).

The protein is Myb/SANT-like DNA-binding domain-containing protein 2 (Msantd2) of Mus musculus (Mouse).